The chain runs to 359 residues: Dual-specificity RNA methyltransferase RlmN (359 aa).

The Proton acceptor role is filled by Glu86. The Radical SAM core domain occupies Glu105–Asp338. Cysteines 112 and 343 form a disulfide. Positions 119, 123, and 126 each coordinate [4Fe-4S] cluster. S-adenosyl-L-methionine-binding positions include Gly169–Glu170, Ser201, Ser224–His226, and Asn300. The active-site S-methylcysteine intermediate is Cys343.

Belongs to the radical SAM superfamily. RlmN family. [4Fe-4S] cluster serves as cofactor.

Its subcellular location is the cytoplasm. It carries out the reaction adenosine(2503) in 23S rRNA + 2 reduced [2Fe-2S]-[ferredoxin] + 2 S-adenosyl-L-methionine = 2-methyladenosine(2503) in 23S rRNA + 5'-deoxyadenosine + L-methionine + 2 oxidized [2Fe-2S]-[ferredoxin] + S-adenosyl-L-homocysteine. It catalyses the reaction adenosine(37) in tRNA + 2 reduced [2Fe-2S]-[ferredoxin] + 2 S-adenosyl-L-methionine = 2-methyladenosine(37) in tRNA + 5'-deoxyadenosine + L-methionine + 2 oxidized [2Fe-2S]-[ferredoxin] + S-adenosyl-L-homocysteine. Its function is as follows. Specifically methylates position 2 of adenine 2503 in 23S rRNA and position 2 of adenine 37 in tRNAs. m2A2503 modification seems to play a crucial role in the proofreading step occurring at the peptidyl transferase center and thus would serve to optimize ribosomal fidelity. The chain is Dual-specificity RNA methyltransferase RlmN from Wolinella succinogenes (strain ATCC 29543 / DSM 1740 / CCUG 13145 / JCM 31913 / LMG 7466 / NCTC 11488 / FDC 602W) (Vibrio succinogenes).